A 101-amino-acid chain; its full sequence is Small ribosomal subunit protein eS24 (101 aa).

This sequence belongs to the eukaryotic ribosomal protein eS24 family.

The polypeptide is Small ribosomal subunit protein eS24 (Methanosarcina acetivorans (strain ATCC 35395 / DSM 2834 / JCM 12185 / C2A)).